The following is a 199-amino-acid chain: Thymidine kinase (199 aa).

ATP is bound by residues 15 to 22 (GSMFSGKS) and 88 to 91 (DEVQ). Residue Glu-89 is the Proton acceptor of the active site. Residues Cys-145, Cys-148, Cys-183, and His-186 each coordinate Zn(2+).

Belongs to the thymidine kinase family. As to quaternary structure, homotetramer.

It localises to the cytoplasm. The catalysed reaction is thymidine + ATP = dTMP + ADP + H(+). The polypeptide is Thymidine kinase (Staphylococcus saprophyticus subsp. saprophyticus (strain ATCC 15305 / DSM 20229 / NCIMB 8711 / NCTC 7292 / S-41)).